Here is a 224-residue protein sequence, read N- to C-terminus: Orotate phosphoribosyltransferase (224 aa).

Residue lysine 29 coordinates 5-phospho-alpha-D-ribose 1-diphosphate. Phenylalanine 37–phenylalanine 38 contributes to the orotate binding site. 5-phospho-alpha-D-ribose 1-diphosphate is bound by residues tyrosine 75–lysine 76, arginine 105, lysine 106, lysine 109, histidine 111, and aspartate 130–serine 138. 2 residues coordinate orotate: threonine 134 and arginine 162.

The protein belongs to the purine/pyrimidine phosphoribosyltransferase family. PyrE subfamily. In terms of assembly, homodimer. Mg(2+) serves as cofactor.

The catalysed reaction is orotidine 5'-phosphate + diphosphate = orotate + 5-phospho-alpha-D-ribose 1-diphosphate. Its pathway is pyrimidine metabolism; UMP biosynthesis via de novo pathway; UMP from orotate: step 1/2. Catalyzes the transfer of a ribosyl phosphate group from 5-phosphoribose 1-diphosphate to orotate, leading to the formation of orotidine monophosphate (OMP). This chain is Orotate phosphoribosyltransferase, found in Bordetella pertussis (strain Tohama I / ATCC BAA-589 / NCTC 13251).